We begin with the raw amino-acid sequence, 141 residues long: Protein archease (141 aa).

Ca(2+)-binding residues include Asp19 and Asp140.

This sequence belongs to the archease family.

In terms of biological role, activates the tRNA-splicing ligase complex by facilitating the enzymatic turnover of catalytic subunit RtcB. Acts by promoting the guanylylation of RtcB, a key intermediate step in tRNA ligation. Can also alter the NTP specificity of RtcB such that ATP, dGTP or ITP is used efficiently. This Thermoplasma acidophilum (strain ATCC 25905 / DSM 1728 / JCM 9062 / NBRC 15155 / AMRC-C165) protein is Protein archease.